Reading from the N-terminus, the 29-residue chain is Varv peptide E (29 aa).

The segment at residues 1-29 (GLPICGETCVGGTCNTPGCSCSWPVCTRN) is a cross-link (cyclopeptide (Gly-Asn)). 3 disulfide bridges follow: cysteine 5–cysteine 19, cysteine 9–cysteine 21, and cysteine 14–cysteine 26.

This is a cyclic peptide.

Probably participates in a plant defense mechanism. Has cytotoxic activity against human lymphoma U-937 GTB and human myeloma RPMI-8226/s cell lines. This Viola arvensis (European field pansy) protein is Varv peptide E.